Here is a 717-residue protein sequence, read N- to C-terminus: Photosystem I P700 chlorophyll a apoprotein A1 (717 aa).

8 consecutive transmembrane segments (helical) span residues 59–82 (VFRAHFGQLAIILIWLSGMYFHGA), 145–168 (LYCTAIGALIFAALMLFAGWFHYH), 184–208 (LNHHLAGLLGLGSLSWAGHQVHVSL), 280–298 (TAHHHLAIAILFLIAGHMY), 335–358 (WHAQLALNLAMLGSLTIVVAHHMY), 374–400 (LSLFTHHMWIGGFLIVGAAAHAAIFMV), 422–444 (AIVSHLNWACIFLGFHSFGLYIH), and 520–538 (FLVHHIHAFTIHVTVLILL). [4Fe-4S] cluster is bound by residues Cys562 and Cys571. The next 2 membrane-spanning stretches (helical) occupy residues 578 to 599 (HVFLGLFWMYNAISVVIFHFSW) and 653 to 675 (LSAYGLLFLGAHXVWAFSLMFLF). His664 serves as a coordination point for chlorophyll a'. Positions 672 and 680 each coordinate chlorophyll a. Trp681 contributes to the phylloquinone binding site. A helical transmembrane segment spans residues 713 to 717 (AVGVA).

It belongs to the PsaA/PsaB family. In terms of assembly, the PsaA/B heterodimer binds the P700 chlorophyll special pair and subsequent electron acceptors. PSI consists of a core antenna complex that captures photons, and an electron transfer chain that converts photonic excitation into a charge separation. The eukaryotic PSI reaction center is composed of at least 11 subunits. It depends on P700 is a chlorophyll a/chlorophyll a' dimer, A0 is one or more chlorophyll a, A1 is one or both phylloquinones and FX is a shared 4Fe-4S iron-sulfur center. as a cofactor.

It is found in the plastid. Its subcellular location is the chloroplast thylakoid membrane. The catalysed reaction is reduced [plastocyanin] + hnu + oxidized [2Fe-2S]-[ferredoxin] = oxidized [plastocyanin] + reduced [2Fe-2S]-[ferredoxin]. In terms of biological role, psaA and PsaB bind P700, the primary electron donor of photosystem I (PSI), as well as the electron acceptors A0, A1 and FX. PSI is a plastocyanin-ferredoxin oxidoreductase, converting photonic excitation into a charge separation, which transfers an electron from the donor P700 chlorophyll pair to the spectroscopically characterized acceptors A0, A1, FX, FA and FB in turn. Oxidized P700 is reduced on the lumenal side of the thylakoid membrane by plastocyanin. The sequence is that of Photosystem I P700 chlorophyll a apoprotein A1 from Cycas revoluta (Sago palm).